Here is an 899-residue protein sequence, read N- to C-terminus: MFISDPTDSLITPLPDLTAHSEAQSRNLGIPDWLKQIEADIATALEKGVDIRHLVEARAASIDSLLIELFKLHELTQTDLALFAVGGYGRGELSPYSDVDILILSPDTLSAEISQKVDGFVARLWDVGIEPGIAVRTIEDCLQVATDITVATNLLEARLLIGNDSLSAIPNNVVQQTWSQKEFYDAKMAEARARHLLHNGTEYNLEPDIKKSPGGLRDIHTIGWITKRYFRITKLYDLVPQDFLTEKEFDELMFAEGFLWRIRHHLHHLTGRNENKLLFDYQRDIAERMGYEQSEEDEPNAAVENFMRDYYRCAMQISTLSEMLTSHYYETLIEARLPESERPEKSVLNARFNRVGDHIAIAHHHVFAQHPEAILEMFLLMGQHGIKHIRTRTLRALKIAARGIDQHYRDNPLHKKLFLDNLKEQNYLFHRLRIMKRYGVLANYMPQFVNLIGLMQYDLFHRYTVDAHILLLIRMLHRFTSPKYQDDFALVGSIYKRIERKEIIVLAAIFHDIAKGRGGDHSELGERDAIEFCLSHGMSEADAKLIGWLTRYHLLMSMTAQKQDISDPEVVTKFANLVGNVTHLNHLYVLTVADMNATNPQLWNSWRASLMKQLYTQTRRILRADLDAPTNRQEMIATTRQQALTMLDKVDNQHMNREEVLALWDELGDEYFLREIPEAIMWHTEAILNHPPIGRASDANSEPLIVLREHRELALDAVQIFIYTQDQANLFAVTMAVFDQMNLDVLDARIITATRDFALDSYVLLDRHGTLLTDPESREELTRRLIDAFKNPETPKLVQKRLPRRLKNFQVPTTIDFNYNEASRQHVMSLTTLDQPGLLARIGQVFLNEGIEVHAARITTLGERAEDMFYISDIGDNMLSDAKLERLRTTLIDVLTPSC.

The interval Met-1 to Val-347 is uridylyltransferase. The tract at residues Leu-348–Val-718 is uridylyl-removing. The HD domain maps to Val-465–Val-581. 2 ACT domains span residues Gln-719–Arg-804 and Val-827–Cys-899.

It belongs to the GlnD family. It depends on Mg(2+) as a cofactor.

It catalyses the reaction [protein-PII]-L-tyrosine + UTP = [protein-PII]-uridylyl-L-tyrosine + diphosphate. The catalysed reaction is [protein-PII]-uridylyl-L-tyrosine + H2O = [protein-PII]-L-tyrosine + UMP + H(+). With respect to regulation, uridylyltransferase (UTase) activity is inhibited by glutamine, while glutamine activates uridylyl-removing (UR) activity. Functionally, modifies, by uridylylation and deuridylylation, the PII regulatory proteins (GlnB and homologs), in response to the nitrogen status of the cell that GlnD senses through the glutamine level. Under low glutamine levels, catalyzes the conversion of the PII proteins and UTP to PII-UMP and PPi, while under higher glutamine levels, GlnD hydrolyzes PII-UMP to PII and UMP (deuridylylation). Thus, controls uridylylation state and activity of the PII proteins, and plays an important role in the regulation of nitrogen assimilation and metabolism. This chain is Bifunctional uridylyltransferase/uridylyl-removing enzyme, found in Psychrobacter sp. (strain PRwf-1).